A 467-amino-acid polypeptide reads, in one-letter code: Syntaxin-5 (467 aa).

Disordered regions lie at residues 1 to 53 (MQTR…QSLV) and 58 to 77 (GHEAAIHIGDNYQSGDSIST). At 1–445 (MQTRRRLHQT…KYFQSVSKNR (445 aa)) the chain is on the cytoplasmic side. Low complexity predominate over residues 10 to 22 (TDQQDYSSSSTYT). Gly residues predominate over residues 29–45 (GGAGAGSVGTGTAGGSV). A compositionally biased stretch (polar residues) spans 68 to 77 (NYQSGDSIST). The stretch at 245 to 269 (IKGDLNALNQQIARLQDISKDQRRH) forms a coiled coil. Residues 310–335 (QQKTRRDQFSQGPGPLAAHTVSPSTA) form a disordered region. In terms of domain architecture, t-SNARE coiled-coil homology spans 375–437 (DNYVQQRAET…EAAHGEILKY (63 aa)). A helical; Anchor for type IV membrane protein membrane pass occupies residues 446–466 (WLMIKIFGVLIFFFLFFVVFM). A topological domain (vesicular) is located at residue serine 467.

This sequence belongs to the syntaxin family. As to quaternary structure, homodimer.

It is found in the golgi apparatus. The protein localises to the cis-Golgi network membrane. Functionally, mediates endoplasmic reticulum to Golgi transport. This Drosophila melanogaster (Fruit fly) protein is Syntaxin-5.